The sequence spans 503 residues: Na(+)-translocating NADH-quinone reductase subunit B (503 aa).

A run of 5 helical transmembrane segments spans residues 55–75 (MMLV…NSGV), 94–114 (ISGF…FSIL), 120–140 (IFLP…VLFA), 161–181 (TLPP…GVVV), and 186–206 (FGGT…FLFF). T248 carries the FMN phosphoryl threonine modification. 5 helical membrane passes run 361 to 381 (TSTF…IASW), 387 to 407 (FGIG…LIVG), 417 to 437 (FFIP…LVFM), 452 to 472 (WIYG…NPAY), and 475 to 495 (GVML…YFAV).

The protein belongs to the NqrB/RnfD family. Composed of six subunits; NqrA, NqrB, NqrC, NqrD, NqrE and NqrF. It depends on FMN as a cofactor.

The protein localises to the cell inner membrane. It catalyses the reaction a ubiquinone + n Na(+)(in) + NADH + H(+) = a ubiquinol + n Na(+)(out) + NAD(+). In terms of biological role, NQR complex catalyzes the reduction of ubiquinone-1 to ubiquinol by two successive reactions, coupled with the transport of Na(+) ions from the cytoplasm to the periplasm. NqrA to NqrE are probably involved in the second step, the conversion of ubisemiquinone to ubiquinol. This Chlamydia caviae (strain ATCC VR-813 / DSM 19441 / 03DC25 / GPIC) (Chlamydophila caviae) protein is Na(+)-translocating NADH-quinone reductase subunit B.